Here is a 216-residue protein sequence, read N- to C-terminus: Ribosomal RNA large subunit methyltransferase E (216 aa).

S-adenosyl-L-methionine-binding residues include G71, W73, D88, D104, and D126. K166 (proton acceptor) is an active-site residue.

It belongs to the class I-like SAM-binding methyltransferase superfamily. RNA methyltransferase RlmE family.

It localises to the cytoplasm. It carries out the reaction uridine(2552) in 23S rRNA + S-adenosyl-L-methionine = 2'-O-methyluridine(2552) in 23S rRNA + S-adenosyl-L-homocysteine + H(+). Its function is as follows. Specifically methylates the uridine in position 2552 of 23S rRNA at the 2'-O position of the ribose in the fully assembled 50S ribosomal subunit. In Wolbachia sp. subsp. Brugia malayi (strain TRS), this protein is Ribosomal RNA large subunit methyltransferase E.